We begin with the raw amino-acid sequence, 216 residues long: Superoxide dismutase [Cu-Zn] 2, chloroplastic (216 aa).

A chloroplast-targeting transit peptide spans 1–62; that stretch reads MAATNTILAF…APSKALTVVS (62 aa). Cu cation is bound by residues histidine 108, histidine 110, and histidine 125. A disulfide bridge connects residues cysteine 119 and cysteine 208. The Zn(2+) site is built by histidine 125, histidine 133, histidine 142, and aspartate 145. Histidine 182 is a Cu cation binding site.

The protein belongs to the Cu-Zn superoxide dismutase family. As to quaternary structure, homotetramer. Cu cation is required as a cofactor. Zn(2+) serves as cofactor. Expressed in leaves (at protein level). The spatial localization is regulated by miR398-mediated silencing. Mostly present in flowers, old rosette leaves and inflorescence, and, to a lower extent, in cauline leaves, stems and roots.

The protein localises to the plastid. Its subcellular location is the chloroplast. The catalysed reaction is 2 superoxide + 2 H(+) = H2O2 + O2. Its function is as follows. Destroys radicals which are normally produced within the cells and which are toxic to biological systems. Mediates tolerance to stress, including photo-oxidative stress. The sequence is that of Superoxide dismutase [Cu-Zn] 2, chloroplastic (CSD2) from Arabidopsis thaliana (Mouse-ear cress).